The sequence spans 201 residues: Protein GrpE (201 aa).

It belongs to the GrpE family. In terms of assembly, homodimer.

The protein resides in the cytoplasm. Functionally, participates actively in the response to hyperosmotic and heat shock by preventing the aggregation of stress-denatured proteins, in association with DnaK and GrpE. It is the nucleotide exchange factor for DnaK and may function as a thermosensor. Unfolded proteins bind initially to DnaJ; upon interaction with the DnaJ-bound protein, DnaK hydrolyzes its bound ATP, resulting in the formation of a stable complex. GrpE releases ADP from DnaK; ATP binding to DnaK triggers the release of the substrate protein, thus completing the reaction cycle. Several rounds of ATP-dependent interactions between DnaJ, DnaK and GrpE are required for fully efficient folding. The sequence is that of Protein GrpE from Shewanella frigidimarina (strain NCIMB 400).